Consider the following 272-residue polypeptide: Shikimate dehydrogenase (NADP(+)) (272 aa).

Shikimate contacts are provided by residues 14–16 and Thr61; that span reads SKS. Lys65 functions as the Proton acceptor in the catalytic mechanism. Glu77 lines the NADP(+) pocket. Residues Asn86 and Asp102 each contribute to the shikimate site. NADP(+)-binding positions include 126-130, 149-154, and Met213; these read GAGGA and NRTVSR. Residue Tyr215 participates in shikimate binding. Residue Gly237 coordinates NADP(+).

This sequence belongs to the shikimate dehydrogenase family. In terms of assembly, homodimer.

It catalyses the reaction shikimate + NADP(+) = 3-dehydroshikimate + NADPH + H(+). It functions in the pathway metabolic intermediate biosynthesis; chorismate biosynthesis; chorismate from D-erythrose 4-phosphate and phosphoenolpyruvate: step 4/7. Its function is as follows. Involved in the biosynthesis of the chorismate, which leads to the biosynthesis of aromatic amino acids. Catalyzes the reversible NADPH linked reduction of 3-dehydroshikimate (DHSA) to yield shikimate (SA). The polypeptide is Shikimate dehydrogenase (NADP(+)) (Escherichia coli O81 (strain ED1a)).